The sequence spans 435 residues: Ras association domain-containing protein 9 (435 aa).

The tract at residues 1 to 22 is disordered; the sequence is MAPFGRNLLKTRHKNRSPTKDM. Residues 25–119 enclose the Ras-associating domain; that stretch reads EEKEIVVWVC…MQFVLVKTDA (95 aa). Residues 195–291 are a coiled coil; sequence HTIHQQVQRM…KLSAEIEREV (97 aa). Residues 371-423 form a disordered region; the sequence is SKDGCQGKENRGKEAEASSSNGEIPPLTQRVFNTYTNDTDSDTGISSNHSQDS. Positions 375-386 are enriched in basic and acidic residues; it reads CQGKENRGKEAE. A compositionally biased stretch (polar residues) spans 400-423; the sequence is RVFNTYTNDTDSDTGISSNHSQDS.

In terms of assembly, interacts with PAM. Testis, kidney, skeletal muscle, liver, lung, brain, heart, pituitary gland, adrenal gland and ovary.

The protein resides in the endosome. May play a role in regulating vesicuar trafficking in cells. This is Ras association domain-containing protein 9 (Rassf9) from Rattus norvegicus (Rat).